Consider the following 580-residue polypeptide: MGSSRLRVFDPHLERKDSAAALSDRELPLPTFDVPYFKYIDEEDEDDEWSSRSQSSTEDDSVDSLLSDRYVVVSGTPEKILEHLLNDLHLEEVQDKETETLLDDFLLTYTVFMTTDDLCQALLRHYSAKKYQGKEENSDVPRRKRKVLHLVSQWIALYKDWLPEDEHSKMFLKTIYRNVLDDVYEYPILEKELKEFQKILGMHRRHTVDEYSPQKKNKALFHQFSLKENWLQHRGTVTETEEIFCHVYITEHSYVSVKAKVSSIAQEILKVVAEKIQYAEEDLALVAITFSGEKHELQPNDLVISKSLEASGRIYVYRKDLADTLNPFAENEESQQRSMRILGMNTWDLALELMNFDWSLFNSIHEQELIYFTFSRQGSGEHTANLSLLLQRCNEVQLWVATEILLCSQLGKRVQLVKKFIKIAAHCKAQRNLNSFFAIVMGLNTASVSRLSQTWEKIPGKFKKLFSELESLTDPSLNHKAYRDAFKKMKPPKIPFMPLLLKDVTFIHEGNKTFLDNLVNFEKLHMIADTVRTLRHCRTNQFGDLSPKEHQELKSYVNHLYVIDSQQALFELSHRIEPRV.

The N-terminal Ras-GEF domain occupies 68–201 (DRYVVVSGTP…ELKEFQKILG (134 aa)). A Ras-GEF domain is found at 345–579 (NTWDLALELM…FELSHRIEPR (235 aa)).

Widely expressed with highest levels in brain.

The protein localises to the nucleus. Functionally, guanine nucleotide exchange factor (GEF) for RAP1A, RAP2A and MRAS/M-Ras-GTP. Its association with MRAS inhibits Rap1 activation. The polypeptide is Rap guanine nucleotide exchange factor 5 (RAPGEF5) (Homo sapiens (Human)).